The chain runs to 275 residues: 4-hydroxy-tetrahydrodipicolinate reductase (275 aa).

Residues 13-18 (GAGGKM) and 108-110 (GTT) each bind NAD(+). H164 functions as the Proton donor/acceptor in the catalytic mechanism. H165 contacts (S)-2,3,4,5-tetrahydrodipicolinate. Catalysis depends on K168, which acts as the Proton donor. 174–175 (GT) lines the (S)-2,3,4,5-tetrahydrodipicolinate pocket.

The protein belongs to the DapB family.

The protein localises to the cytoplasm. The enzyme catalyses (S)-2,3,4,5-tetrahydrodipicolinate + NAD(+) + H2O = (2S,4S)-4-hydroxy-2,3,4,5-tetrahydrodipicolinate + NADH + H(+). The catalysed reaction is (S)-2,3,4,5-tetrahydrodipicolinate + NADP(+) + H2O = (2S,4S)-4-hydroxy-2,3,4,5-tetrahydrodipicolinate + NADPH + H(+). It functions in the pathway amino-acid biosynthesis; L-lysine biosynthesis via DAP pathway; (S)-tetrahydrodipicolinate from L-aspartate: step 4/4. Functionally, catalyzes the conversion of 4-hydroxy-tetrahydrodipicolinate (HTPA) to tetrahydrodipicolinate. This is 4-hydroxy-tetrahydrodipicolinate reductase from Picosynechococcus sp. (strain ATCC 27264 / PCC 7002 / PR-6) (Agmenellum quadruplicatum).